Here is a 299-residue protein sequence, read N- to C-terminus: Delta-9 desaturase-like 3 protein (299 aa).

A run of 2 helical transmembrane segments spans residues 38-57 (AVGA…TWEA) and 58-76 (FRFA…TFSY). The Histidine box-1 signature appears at 77 to 82 (HRNLTH). The Histidine box-2 signature appears at 114–118 (HRFHH). Helical transmembrane passes span 174–194 (IGLH…LPYL) and 198–218 (VGVG…ACHI). The short motif at 246–250 (HNNHH) is the Histidine box-3 element. A helical membrane pass occupies residues 262 to 282 (WYQVDLTWYLIWFFQVLGLAT).

Belongs to the fatty acid desaturase type 1 family. Requires Fe cation as cofactor.

The protein resides in the endoplasmic reticulum membrane. The protein operates within lipid metabolism; polyunsaturated fatty acid biosynthesis. This chain is Delta-9 desaturase-like 3 protein, found in Arabidopsis thaliana (Mouse-ear cress).